The sequence spans 409 residues: Elongation factor Tu (409 aa).

In terms of domain architecture, tr-type G spans 10–214 (KPHVNVGTIG…AVDNYIPTPE (205 aa)). Residues 19-26 (GHVDHGKT) form a G1 region. 19–26 (GHVDHGKT) provides a ligand contact to GTP. Thr26 contacts Mg(2+). Positions 60-64 (GITIN) are G2. A G3 region spans residues 81–84 (DCPG). GTP-binding positions include 81 to 85 (DCPGH) and 136 to 139 (NKVD). The interval 136–139 (NKVD) is G4. Residues 174-176 (SGL) are G5.

It belongs to the TRAFAC class translation factor GTPase superfamily. Classic translation factor GTPase family. EF-Tu/EF-1A subfamily. In terms of assembly, monomer.

It is found in the cytoplasm. The enzyme catalyses GTP + H2O = GDP + phosphate + H(+). In terms of biological role, GTP hydrolase that promotes the GTP-dependent binding of aminoacyl-tRNA to the A-site of ribosomes during protein biosynthesis. This is Elongation factor Tu from Thermosynechococcus vestitus (strain NIES-2133 / IAM M-273 / BP-1).